The chain runs to 619 residues: MFVPRSLKIKRNANDDGKSCVAKIIKPDPEDLQLDKSRDVPVDAVATEAATIDRHISESCPFPSPGGQLAEVHSVSPEQGAKDSHPSEEPVKSFSKTQRWAEPGEPICVVCGRYGEYICDKTDEDVCSLECKAKHLLQVKEKEEKSKLSNPQKADSEPESPLNASYVYKEHPFILNLQEDQIENLKQQLGILVQGQEVTRPIIDFEHCSLPEVLNHNLKKSGYEVPTPIQMQMIPVGLLGRDILASADTGSGKTAAFLLPVIMRALFESKTPSALILTPTRELAIQIERQAKELMSGLPRMKTVLLVGGLPLPPQLYRLQQHVKVIIATPGRLLDIIKQSSVELCGVKIVVVDEADTMLKMGFQQQVLDILENIPNDCQTILVSATIPTSIEQLASQLLHNPVRIITGEKNLPCANVRQIILWVEDPAKKKKLFEILNDKKLFKPPVLVFVDCKLGADLLSEAVQKITGLKSISIHSEKSQIERKNILKGLLEGDYEVVVSTGVLGRGLDLISVRLVVNFDMPSSMDEYVHQIGRVGRLGQNGTAITFINNNSKRLFWDIAKRVKPTGSILPPQLLNSPYLHDQKRKEQQKDKQTQNDLVTGANLMDIIRKHDKSNSQK.

Residue K26 forms a Glycyl lysine isopeptide (Lys-Gly) (interchain with G-Cter in SUMO2) linkage. The disordered stretch occupies residues 57-98 (SESCPFPSPGGQLAEVHSVSPEQGAKDSHPSEEPVKSFSKTQ). A phosphoserine mark is found at S64 and S76. Residues 80–91 (GAKDSHPSEEPV) are compositionally biased toward basic and acidic residues. The HIT-type zinc-finger motif lies at 104 to 133 (GEPICVVCGRYGEYICDKTDEDVCSLECKA). Positions 142 to 161 (KEEKSKLSNPQKADSEPESP) are disordered. Residues S156 and S160 each carry the phosphoserine modification. The short motif at 203-231 (IDFEHCSLPEVLNHNLKKSGYEVPTPIQM) is the Q motif element. Residues 234-405 (IPVGLLGRDI…SQLLHNPVRI (172 aa)) enclose the Helicase ATP-binding domain. 247 to 254 (ADTGSGKT) is an ATP binding site. Residues 353-356 (DEAD) carry the DEAD box motif. The Helicase C-terminal domain occupies 416 to 579 (NVRQIILWVE…ILPPQLLNSP (164 aa)).

This sequence belongs to the DEAD box helicase family. DDX59 subfamily. In terms of assembly, interacts (via HIT-type zinc finger) with the RUVBL1/RUVBL2 complex in the presence of ADP. Expressed in fibroblasts (at protein level).

It is found in the cytoplasm. It localises to the nucleus. It carries out the reaction ATP + H2O = ADP + phosphate + H(+). This chain is Probable ATP-dependent RNA helicase DDX59 (DDX59), found in Homo sapiens (Human).